The following is a 233-amino-acid chain: Phosphoenolpyruvate guanylyltransferase 1 (233 aa).

Phosphoenolpyruvate contacts are provided by threonine 154, glycine 171, and serine 174.

This sequence belongs to the CofC family.

It carries out the reaction phosphoenolpyruvate + GTP + H(+) = enolpyruvoyl-2-diphospho-5'-guanosine + diphosphate. It functions in the pathway cofactor biosynthesis; coenzyme F420 biosynthesis. Its function is as follows. Guanylyltransferase that catalyzes the activation of phosphoenolpyruvate (PEP) as enolpyruvoyl-2-diphospho-5'-guanosine, via the condensation of PEP with GTP. It is involved in the biosynthesis of coenzyme F420, a hydride carrier cofactor. This is Phosphoenolpyruvate guanylyltransferase 1 from Rhodococcus jostii (strain RHA1).